A 397-amino-acid chain; its full sequence is Acetate kinase (397 aa).

Asn8 is a binding site for Mg(2+). Position 15 (Lys15) interacts with ATP. Arg89 contacts substrate. Asp146 serves as the catalytic Proton donor/acceptor. ATP contacts are provided by residues 206–210 (HLGNG), 280–282 (DMR), and 328–332 (GVGEN). Glu382 is a binding site for Mg(2+).

The protein belongs to the acetokinase family. In terms of assembly, homodimer. The cofactor is Mg(2+). Mn(2+) serves as cofactor.

Its subcellular location is the cytoplasm. The enzyme catalyses acetate + ATP = acetyl phosphate + ADP. The protein operates within metabolic intermediate biosynthesis; acetyl-CoA biosynthesis; acetyl-CoA from acetate: step 1/2. Its function is as follows. Catalyzes the formation of acetyl phosphate from acetate and ATP. Can also catalyze the reverse reaction. The protein is Acetate kinase of Leifsonia xyli subsp. xyli (strain CTCB07).